The chain runs to 313 residues: Ketimine reductase mu-crystallin (313 aa).

Residue R47 participates in 3,3',5-triiodo-L-thyronine binding. Residues S90, H91, R118, A143, V145, Q146, N167, R168, T169, N172, T204, M205, and V225 each coordinate NADPH. E256 is a binding site for 3,3',5-triiodo-L-thyronine. An NADPH-binding site is contributed by S291.

The protein belongs to the ornithine cyclodeaminase/mu-crystallin family. In terms of assembly, homodimer. Binds the thyroid hormone triiodothyronine (T3); T3 binding inhibits enzymatic activity.

It is found in the cytoplasm. It carries out the reaction L-pipecolate + NADP(+) = Delta(1)-piperideine-2-carboxylate + NADPH + H(+). The enzyme catalyses L-pipecolate + NAD(+) = Delta(1)-piperideine-2-carboxylate + NADH + H(+). The catalysed reaction is L-proline + NADP(+) = 1-pyrroline-2-carboxylate + NADPH + H(+). It catalyses the reaction L-proline + NAD(+) = 1-pyrroline-2-carboxylate + NADH + H(+). It carries out the reaction (3R)-1,4-thiomorpholine-3-carboxylate + NAD(+) = 3,4-dehydrothiomorpholine-3-carboxylate + NADH + 2 H(+). The enzyme catalyses (3R)-1,4-thiomorpholine-3-carboxylate + NADP(+) = 3,4-dehydrothiomorpholine-3-carboxylate + NADPH + 2 H(+). The catalysed reaction is (S)-cystathionine ketimine + NADH + 2 H(+) = (3R,5S)-2,3,5,6,7-pentahydro-1,4-thiazepine-3,5-dicarboxylate + NAD(+). It catalyses the reaction (S)-cystathionine ketimine + NADPH + 2 H(+) = (3R,5S)-2,3,5,6,7-pentahydro-1,4-thiazepine-3,5-dicarboxylate + NADP(+). It carries out the reaction (R)-lanthionine ketimine + NADPH + 2 H(+) = (3R,5R)-1,4-thiomorpholine-3,5-dicarboxylate + NADP(+). The enzyme catalyses Delta(2)-thiazoline-2-carboxylate + NADPH + 2 H(+) = L-thiazolidine-2-carboxylate + NADP(+). Its function is as follows. Catalyzes the NAD(P)H-dependent reduction of imine double bonds of a number of cyclic ketimine substrates, including sulfur-containing cyclic ketimines. Under physiological conditions, it efficiently catalyzes delta(1)-piperideine-2-carboxylate (P2C) and delta(1)-pyrroline-2-carboxylate (Pyr2C) reduction, suggesting a central role in lysine and glutamate metabolism. Additional substrates are delta(2)-thiazoline-2-carboxylate (T2C), 3,4-dehydrothiomorpholine-3-carboxylate (AECK), and (R)-lanthionine ketimine (LK) that is reduced at very low rate compared to other substrates. Also catalyzes the NAD(P)H-dependent reduction of (S)-cystathionine ketimine (CysK). The chain is Ketimine reductase mu-crystallin from Rattus norvegicus (Rat).